The sequence spans 192 residues: uncharacterized protein (192 aa).

One can recognise a Nudix hydrolase domain in the interval histidine 29–serine 160. Residues glycine 67–alanine 89 carry the Nudix box motif. Residues glutamate 83 and glutamate 87 each contribute to the Mg(2+) site.

It belongs to the Nudix hydrolase family. PCD1 subfamily. Mn(2+) serves as cofactor. The cofactor is Mg(2+).

Probably mediates the hydrolysis of some nucleoside diphosphate derivatives. This is an uncharacterized protein from Escherichia coli O6:H1 (strain CFT073 / ATCC 700928 / UPEC).